Here is a 731-residue protein sequence, read N- to C-terminus: Gelsolin (731 aa).

Positions 2-125 (VVEHPEFLKA…YKKGGVASGF (124 aa)) are actin-severing. One copy of the Gelsolin-like 1 repeat lies at 25–107 (FDLVPVPPNL…VQGFESATFL (83 aa)). The residue at position 35 (tyrosine 35) is a Phosphotyrosine. Positions 41, 42, 73, 85, 90, and 92 each coordinate Ca(2+). Positions 72-75 (DESG) are actin-actin interfilament contact point. 111-118 (KSGLKYKK) serves as a coordination point for a 1,2-diacyl-sn-glycero-3-phospho-(1D-myo-inositol-4,5-bisphosphate). Valine 121 contacts Ca(2+). 137-145 (RLFQVKGRR) provides a ligand contact to a 1,2-diacyl-sn-glycero-3-phospho-(1D-myo-inositol-4,5-bisphosphate). A Gelsolin-like 2 repeat occupies 147–219 (VRATEVPVSW…SEEGAEPEAM (73 aa)). Residues glycine 162 and aspartate 163 each coordinate Ca(2+). Cysteine 164 and cysteine 177 form a disulfide bridge. Residue glutamate 185 coordinates Ca(2+). The segment covering 197–211 (RDNERSGRARVHVSE) has biased composition (basic and acidic residues). Positions 197–216 (RDNERSGRARVHVSEEGAEP) are disordered. 4 residues coordinate Ca(2+): aspartate 235, glutamate 278, aspartate 279, and glutamate 303. Residues 266–338 (DENPFAQGAL…LPEGGETPLF (73 aa)) form a Gelsolin-like 3 repeat. Tyrosine 358 and tyrosine 414 each carry phosphotyrosine. The segment at 383–731 (AAQHGMDDDG…LDRALAELAA (349 aa)) is actin-binding, Ca-sensitive. One copy of the Gelsolin-like 4 repeat lies at 404–485 (SDKVPVDPAT…VQGKEPAHLM (82 aa)). Positions 420, 421, 451, 463, 468, 470, and 500 each coordinate Ca(2+). Residues 527-591 (AVEVMPKAGA…AEGSEPDSFW (65 aa)) form a Gelsolin-like 5 repeat. The residue at position 533 (lysine 533) is an N6-acetyllysine. Ca(2+)-binding residues include asparagine 540 and aspartate 541. Position 552 is a phosphotyrosine (tyrosine 552). Residue glutamate 563 coordinates Ca(2+). Tyrosine 600 is subject to Phosphotyrosine. A Gelsolin-like 6 repeat occupies 630–705 (IEEVPGELMQ…VKQGFEPPSF (76 aa)). Residues aspartate 645, aspartate 646, and glutamate 668 each contribute to the Ca(2+) site. Threonine 691 is subject to Phosphothreonine.

It belongs to the villin/gelsolin family. Binds to actin and to fibronectin. Identified in a complex composed of ACTA1, COBL, GSN and TMSB4X. Interacts with the inactive form of EIF2AK2/PKR. Interacts with FLII.

The protein resides in the cytoplasm. Its subcellular location is the cytoskeleton. Its function is as follows. Calcium-regulated, actin-modulating protein that binds to the plus (or barbed) ends of actin monomers or filaments, preventing monomer exchange (end-blocking or capping). It can promote the assembly of monomers into filaments (nucleation) as well as sever filaments already formed. Plays a role in ciliogenesis. This Bos taurus (Bovine) protein is Gelsolin (GSN).